Reading from the N-terminus, the 962-residue chain is DNA primase (962 aa).

The CHC2-type zinc finger occupies 894–932 (CLRARHARSPPARTFVALSVDAHDRLCISLSQQCFATKC).

This sequence belongs to the herpesviridae DNA primase family. In terms of assembly, associates with the helicase and the primase-associated factor to form the helicase-primase factor.

The protein resides in the host nucleus. In terms of biological role, essential component of the helicase/primase complex. Unwinds the DNA at the replication forks and generates single-stranded DNA for both leading and lagging strand synthesis. The primase initiates primer synthesis and thereby produces large amount of short RNA primers on the lagging strand that the polymerase elongates using dNTPs. This Sus scrofa (Pig) protein is DNA primase (UL52).